Reading from the N-terminus, the 578-residue chain is Probable nucleoredoxin 1 (578 aa).

3 Thioredoxin domains span residues 18 to 172 (SLLS…RARR), 178 to 321 (SVLV…EKFQ), and 325 to 485 (ELEK…EIEA).

Belongs to the nucleoredoxin family.

It catalyses the reaction [protein]-dithiol + NAD(+) = [protein]-disulfide + NADH + H(+). It carries out the reaction [protein]-dithiol + NADP(+) = [protein]-disulfide + NADPH + H(+). In terms of biological role, probable thiol-disulfide oxidoreductase required for pollen tube growth and pollen function in the pistil. Seems not to be required for in vitro pollen tube growth. May be involved in the generation of lipid signaling molecules in pistil. The polypeptide is Probable nucleoredoxin 1 (Arabidopsis thaliana (Mouse-ear cress)).